A 1166-amino-acid chain; its full sequence is Folliculin-interacting protein 1 (1166 aa).

In terms of domain architecture, uDENN FNIP1/2-type spans 37-478 (FDPSQIRLIV…TVMPNGQPPI (442 aa)). Residues Ser-220, Ser-230, Ser-232, and Ser-261 each carry the phosphoserine; by AMPK modification. Thr-294 is subject to Phosphothreonine. Ser-296 is subject to Phosphoserine. Positions 486–1092 (SSQSVDMLAK…VSNLLHSTLQ (607 aa)) constitute a cDENN FNIP1/2-type domain. Phosphoserine; by AMPK is present on Ser-593. Ser-594 is modified (phosphoserine). Zn(2+) contacts are provided by Cys-608 and Cys-610. A Cys degron motif is present at residues 608 to 615 (CNCKYCSH). The segment at 611–612 (KY) is KY-finger. Residues Cys-613 and His-615 each contribute to the Zn(2+) site. A phosphoserine mark is found at Ser-760 and Ser-763. Disordered stretches follow at residues 781 to 817 (TKPL…VSEE) and 912 to 956 (LVPH…HDMT). Composition is skewed to basic and acidic residues over residues 783–805 (PLKE…KDQS) and 915–925 (HGDKESSDKKI). The interval 929 to 1166 (TEWDIPRNES…HSPYVAQILL (238 aa)) is interaction with HSP90AA1. The residue at position 938 (Ser-938) is a Phosphoserine; alternate; by CK2. O-linked (GlcNAc) serine; alternate glycosylation is present at Ser-938. A phosphoserine; by CK2 mark is found at Ser-939, Ser-941, Ser-946, and Ser-948. The dDENN FNIP1/2-type domain maps to 1102–1157 (FCVMHLEDRLQELYFKSKMLSEYLRGQMRVHVKELGVVLGIESSDLPLLAAVASTH). Lys-1119 participates in a covalent cross-link: Glycyl lysine isopeptide (Lys-Gly) (interchain with G-Cter in ubiquitin).

It belongs to the FNIP family. In terms of assembly, homodimer and homomultimer. Heterodimer and heteromultimer with FNIP2. Interacts with FLCN (via C-terminus). Component of the lysosomal folliculin complex (LFC), composed of FLCN, FNIP1 (or FNIP2), RagA/RRAGA or RagB/RRAGB GDP-bound, RagC/RRAGC or RagD/RRAGD GTP-bound, and Ragulator. Interacts with HSPCA and with the PRKAA1, PRKAB1 and PRKAG1 subunits of 5'-AMP-activated protein kinase (AMPK). Phosphorylated FLCN and AMPK are preferentially bound. Interacts with HSP70, STIP1, PTGES3, CDC37, BRAF, GCR and CDK4. Interacts with HSP90AA1; the interaction inhibits HSP90AA1 ATPase activity. Interacts with ATP2A2. Phosphorylated by AMPK in response to energetic stress. Phosphorylation by AMPK in response to mitochondrial damage promotes inactivation of the non-canonical mTORC1 signaling, nuclear translocation of TFEB and TFE3, inducing transcription of lysosomal or autophagy genes. Sequential phosphorylation by CK2 promotes its gradual interaction with HSP90AA1/Hsp90. Priming phosphorylation at Ser-938 is followed by relay phosphorylation at Ser-939, Ser-941, Ser-946 and Ser-948, promoting its gradual interaction with HSP90AA1/Hsp90. This leads to incremental inhibition of HSP90AA1/Hsp90 ATPase activity and gradual activation of both kinase and non-kinase clients. Dephosphorylated by protein phosphatase 5 (PP5), promoting glycosylation by OGT. Post-translationally, glcNAcylation at Ser-938 by OGT following dephosphorylation by protein phosphatase 5 (PP5) promotes ubiquitination and degradation by the proteasome. In terms of processing, ubiquitinated through 'Lys-11' linkage of ubiquitin moieties at Lys-1119 following glycosylation by OGT, leading to its degradation by the proteasome. Ubiquitinated by the CRL2(FEM1B) complex in response to reductive stress: reductive stress causes reduction of the conserved Cys degron in FNIP1, followed by zinc-binding, zinc acting as a molecular glue for recognition by the CRL2(FEM1B) complex. Ubiquitination leads to FNIP1 degradation, and activation of mitochondria to recalibrate reactive oxygen species (ROS). Oxidation of the Cys degron in normal conditions promotes its stabilization by preventing recognition and ubiquitination by the CRL2(FEM1B) complex. Strong expression is found in the heart, liver placenta, muscle, nasal mucosa, salivary gland and uvula and moderate expression in kidney and lung. Higher levels detected in clear cell renal cell carcinoma (RCC) and chromophobe RCC than in normal kidney tissue. Expressed in peripheral blood mononuclear cells.

The protein localises to the lysosome membrane. It is found in the cytoplasm. The protein resides in the cytosol. In terms of biological role, binding partner of the GTPase-activating protein FLCN: involved in the cellular response to amino acid availability by regulating the non-canonical mTORC1 signaling cascade controlling the MiT/TFE factors TFEB and TFE3. Required to promote FLCN recruitment to lysosomes and interaction with Rag GTPases, leading to activation of the non-canonical mTORC1 signaling. In low-amino acid conditions, component of the lysosomal folliculin complex (LFC) on the membrane of lysosomes, which inhibits the GTPase-activating activity of FLCN, thereby inactivating mTORC1 and promoting nuclear translocation of TFEB and TFE3. Upon amino acid restimulation, disassembly of the LFC complex liberates the GTPase-activating activity of FLCN, leading to activation of mTORC1 and subsequent inactivation of TFEB and TFE3. Together with FLCN, regulates autophagy: following phosphorylation by ULK1, interacts with GABARAP and promotes autophagy. In addition to its role in mTORC1 signaling, also acts as a co-chaperone of HSP90AA1/Hsp90: following gradual phosphorylation by CK2, inhibits the ATPase activity of HSP90AA1/Hsp90, leading to activate both kinase and non-kinase client proteins of HSP90AA1/Hsp90. Acts as a scaffold to load client protein FLCN onto HSP90AA1/Hsp90. Competes with the activating co-chaperone AHSA1 for binding to HSP90AA1, thereby providing a reciprocal regulatory mechanism for chaperoning of client proteins. Also acts as a core component of the reductive stress response by inhibiting activation of mitochondria in normal conditions: in response to reductive stress, the conserved Cys degron is reduced, leading to recognition and polyubiquitylation by the CRL2(FEM1B) complex, followed by proteasomal. Required for B-cell development. The protein is Folliculin-interacting protein 1 of Homo sapiens (Human).